The following is a 479-amino-acid chain: Ribulose bisphosphate carboxylase large chain (479 aa).

A propeptide spanning residues 1–2 (MS) is cleaved from the precursor. Substrate-binding residues include N123 and T173. Catalysis depends on K175, which acts as the Proton acceptor. K177 contributes to the substrate binding site. The Mg(2+) site is built by K201, D203, and E204. At K201 the chain carries N6-carboxylysine. Residue S208 is modified to Phosphoserine. Residue H294 is the Proton acceptor of the active site. Substrate contacts are provided by R295 and H327. T330 is subject to Phosphothreonine. S379 provides a ligand contact to substrate.

The protein belongs to the RuBisCO large chain family. Type I subfamily. As to quaternary structure, heterohexadecamer of 8 large chains and 8 small chains; disulfide-linked. The disulfide link is formed within the large subunit homodimers. Mg(2+) serves as cofactor. Post-translationally, the disulfide bond which can form in the large chain dimeric partners within the hexadecamer appears to be associated with oxidative stress and protein turnover.

It is found in the plastid. The protein resides in the chloroplast. It carries out the reaction 2 (2R)-3-phosphoglycerate + 2 H(+) = D-ribulose 1,5-bisphosphate + CO2 + H2O. It catalyses the reaction D-ribulose 1,5-bisphosphate + O2 = 2-phosphoglycolate + (2R)-3-phosphoglycerate + 2 H(+). Its function is as follows. RuBisCO catalyzes two reactions: the carboxylation of D-ribulose 1,5-bisphosphate, the primary event in carbon dioxide fixation, as well as the oxidative fragmentation of the pentose substrate in the photorespiration process. Both reactions occur simultaneously and in competition at the same active site. The polypeptide is Ribulose bisphosphate carboxylase large chain (Barbarea verna (Land cress)).